The primary structure comprises 525 residues: GMP synthase [glutamine-hydrolyzing] (525 aa).

The Glutamine amidotransferase type-1 domain occupies 16–205 (PVLVVDFGAQ…LHDFAGLGAQ (190 aa)). The Nucleophile role is filled by cysteine 93. Active-site residues include histidine 179 and glutamate 181. Residues 206 to 399 (WTPANIANAL…LGLPEEIVAR (194 aa)) enclose the GMPS ATP-PPase domain. An ATP-binding site is contributed by 233-239 (SGGVDSA).

Homodimer.

The catalysed reaction is XMP + L-glutamine + ATP + H2O = GMP + L-glutamate + AMP + diphosphate + 2 H(+). It functions in the pathway purine metabolism; GMP biosynthesis; GMP from XMP (L-Gln route): step 1/1. Catalyzes the synthesis of GMP from XMP. In Mycobacterium bovis (strain BCG / Pasteur 1173P2), this protein is GMP synthase [glutamine-hydrolyzing].